We begin with the raw amino-acid sequence, 45 residues long: Mu-conotoxin-like Cal 12.1.2c (45 aa).

Disulfide bonds link C3-C16, C11-C28, C18-C33, and C27-C39. The residue at position 23 (P23) is a 4-hydroxyproline. 6'-bromotryptophan occurs at positions 37 and 38. A 4-hydroxyproline modification is found at P40. W44 is subject to 6'-bromotryptophan.

In terms of tissue distribution, expressed by the venom duct.

It localises to the secreted. In terms of biological role, mu-conotoxins block voltage-gated sodium channels. This toxin reversibly blocks voltage-gated sodium channel in cephalopods, with no alteration in the voltage dependence of sodium conductance or on the kinetics of inactivation. In Californiconus californicus (California cone), this protein is Mu-conotoxin-like Cal 12.1.2c.